Consider the following 395-residue polypeptide: Homoserine O-acetyltransferase (395 aa).

One can recognise an AB hydrolase-1 domain in the interval 65 to 363 (PIVLIEHALT…SPTGHDGFLI (299 aa)). Residue Ser160 is the Nucleophile of the active site. Arg230 contributes to the substrate binding site. Active-site residues include Asp328 and His358. Asp359 contacts substrate.

It belongs to the AB hydrolase superfamily. MetX family. In terms of assembly, homodimer.

It localises to the cytoplasm. The enzyme catalyses L-homoserine + acetyl-CoA = O-acetyl-L-homoserine + CoA. Its pathway is amino-acid biosynthesis; L-methionine biosynthesis via de novo pathway; O-acetyl-L-homoserine from L-homoserine: step 1/1. Transfers an acetyl group from acetyl-CoA to L-homoserine, forming acetyl-L-homoserine. In Corynebacterium jeikeium (strain K411), this protein is Homoserine O-acetyltransferase.